The following is a 379-amino-acid chain: RING finger protein 215 (379 aa).

2 disordered regions span residues 1 to 21 (MGSA…PPSP) and 44 to 63 (AADG…RSVR). Residues 1-24 (MGSADRPALRSPSLPPPPPSPPSP) are Cytoplasmic-facing. A helical membrane pass occupies residues 25–45 (LLLLLPLLPLWLGLMGPGAAA). Residues 46 to 252 (DGSEPATGEG…GGAQAQEQKP (207 aa)) are Extracellular-facing. N-linked (GlcNAc...) asparagine glycosylation is present at Asn188. The helical transmembrane segment at 253–273 (LQQLWNAILLVAMLLCTGLVV) threads the bilayer. Topologically, residues 274–379 (QAQRQASRQN…NVLGNHYSDD (106 aa)) are cytoplasmic. The segment at 327 to 368 (CAVCLDYFCNKQWLRVLPCKHEFHRDCVDPWLMLQQTCPLCK) adopts an RING-type; atypical zinc-finger fold.

It is found in the membrane. The chain is RING finger protein 215 (Rnf215) from Mus musculus (Mouse).